The chain runs to 351 residues: uncharacterized protein (351 aa).

The disordered stretch occupies residues 25–67 (KKAETETLPPANSQPAAPAPEAKPTEAPVAKAEAKPETPAQPV). Low complexity predominate over residues 33 to 55 (PPANSQPAAPAPEAKPTEAPVAK).

This is an uncharacterized protein from Escherichia coli (strain K12).